The primary structure comprises 85 residues: Translation initiation factor IF-1 1 (85 aa).

Residues 1–72 (MSKEDLIEMQ…NKGRLTFRHI (72 aa)) form the S1-like domain.

The protein belongs to the IF-1 family. In terms of assembly, component of the 30S ribosomal translation pre-initiation complex which assembles on the 30S ribosome in the order IF-2 and IF-3, IF-1 and N-formylmethionyl-tRNA(fMet); mRNA recruitment can occur at any time during PIC assembly.

It is found in the cytoplasm. In terms of biological role, one of the essential components for the initiation of protein synthesis. Stabilizes the binding of IF-2 and IF-3 on the 30S subunit to which N-formylmethionyl-tRNA(fMet) subsequently binds. Helps modulate mRNA selection, yielding the 30S pre-initiation complex (PIC). Upon addition of the 50S ribosomal subunit IF-1, IF-2 and IF-3 are released leaving the mature 70S translation initiation complex. The protein is Translation initiation factor IF-1 1 of Paracidovorax citrulli (strain AAC00-1) (Acidovorax citrulli).